The chain runs to 210 residues: Orotate phosphoribosyltransferase (210 aa).

Residues Arg-94, Lys-98, His-100, and 120-128 (EDLISTGGS) each bind 5-phospho-alpha-D-ribose 1-diphosphate. Ser-124 provides a ligand contact to orotate.

Belongs to the purine/pyrimidine phosphoribosyltransferase family. PyrE subfamily. In terms of assembly, homodimer. Requires Mg(2+) as cofactor.

The catalysed reaction is orotidine 5'-phosphate + diphosphate = orotate + 5-phospho-alpha-D-ribose 1-diphosphate. It participates in pyrimidine metabolism; UMP biosynthesis via de novo pathway; UMP from orotate: step 1/2. Functionally, catalyzes the transfer of a ribosyl phosphate group from 5-phosphoribose 1-diphosphate to orotate, leading to the formation of orotidine monophosphate (OMP). This Bacillus mycoides (strain KBAB4) (Bacillus weihenstephanensis) protein is Orotate phosphoribosyltransferase.